We begin with the raw amino-acid sequence, 232 residues long: 2-C-methyl-D-erythritol 4-phosphate cytidylyltransferase (232 aa).

It belongs to the IspD/TarI cytidylyltransferase family. IspD subfamily.

It catalyses the reaction 2-C-methyl-D-erythritol 4-phosphate + CTP + H(+) = 4-CDP-2-C-methyl-D-erythritol + diphosphate. Its pathway is isoprenoid biosynthesis; isopentenyl diphosphate biosynthesis via DXP pathway; isopentenyl diphosphate from 1-deoxy-D-xylulose 5-phosphate: step 2/6. In terms of biological role, catalyzes the formation of 4-diphosphocytidyl-2-C-methyl-D-erythritol from CTP and 2-C-methyl-D-erythritol 4-phosphate (MEP). In Neorickettsia sennetsu (strain ATCC VR-367 / Miyayama) (Ehrlichia sennetsu), this protein is 2-C-methyl-D-erythritol 4-phosphate cytidylyltransferase.